Here is a 918-residue protein sequence, read N- to C-terminus: Probable UDP-N-acetylglucosamine--peptide N-acetylglucosaminyltransferase SPINDLY (918 aa).

TPR repeat units lie at residues 34-66, 67-99, 101-132, 140-171, 172-205, 207-238, 239-271, 273-305, 306-339, 341-373, and 374-407; these read GKEAITYAKILRSRNKFVDALAIYELEKDSKNV, EAHIGKGICLQTQNKGNLAFDCFSEAIRLDPHN, CALTHCGILYKDEGRLVEAASYQKALQADPSY, ATVLNDLGTSLKGNTQEGIQKYYEAVKIDPHY, APACYNLGVVYSEMMQYDVALSCYERAATESPTY, DAYCNTGIIYKNRGDLCLAVSPNFEIAKNNMG, IALTDLGTKEKLEGDIDQGVAYYKKALYYNWHY, DAMYNLGVAYGEMLKFDMAIIFDELAFHFNPHC, AEACNNLGVIYKDRDNLDKAVECYQKALSIKPNF, QSLNNLGVVFTVQGKMDAAASMIEKAIVANPTY, and AEAYNNLGVLYRDAGNIFLAIEAYEQCLKIDPDS. Residues 408-918 are catalytic region; the sequence is RNAGQNRLLA…LNCGDQCFRV (511 aa). The span at 843–853 shows a compositional bias: polar residues; sequence QLHQQPNTSPQ. A disordered region spans residues 843 to 877; sequence QLHQQPNTSPQKLVKDEPADDASGPEHGPASKDNP.

The protein belongs to the glycosyltransferase 41 family. O-GlcNAc transferase subfamily.

The protein localises to the nucleus. It carries out the reaction L-seryl-[protein] + UDP-N-acetyl-alpha-D-glucosamine = 3-O-(N-acetyl-beta-D-glucosaminyl)-L-seryl-[protein] + UDP + H(+). The enzyme catalyses L-threonyl-[protein] + UDP-N-acetyl-alpha-D-glucosamine = 3-O-(N-acetyl-beta-D-glucosaminyl)-L-threonyl-[protein] + UDP + H(+). It participates in protein modification; protein glycosylation. Probable O-linked N-acetylglucosamine transferase (OGT) involved in various processes such as gibberellin (GA) signaling pathway. OGTs catalyze the addition of nucleotide-activated sugars directly onto the polypeptide through O-glycosidic linkage with the hydroxyl of serine or threonine. Probably acts by adding O-linked sugars to yet unknown proteins. May function as a negative regulator of GA signal transduction during vernalization, inhibiting adventitious shoot elongation during vernalization. This is Probable UDP-N-acetylglucosamine--peptide N-acetylglucosaminyltransferase SPINDLY (SPY) from Eustoma exaltatum subsp. russellianum (Bluebells).